Reading from the N-terminus, the 626-residue chain is Interferon-induced GTP-binding protein MxC (626 aa).

Positions 40–313 constitute a Dynamin-type G domain; it reads DLNLPAIAVI…LVEHIAKNVP (274 aa). The interval 50–57 is G1 motif; sequence GDQSSGKS. 50–57 contributes to the GTP binding site; it reads GDQSSGKS. The interval 75 to 77 is G2 motif; the sequence is VTR. Positions 151–154 are G3 motif; sequence DLPG. Residues 151 to 155 and 220 to 223 contribute to the GTP site; these read DLPGI and TKPD. The segment at 220–223 is G4 motif; sequence TKPD. Positions 252 to 255 are G5 motif; the sequence is KCRG. The GED domain maps to 534 to 624; sequence LRETAFHLTS…ALPKVVHSAN (91 aa).

It belongs to the TRAFAC class dynamin-like GTPase superfamily. Dynamin/Fzo/YdjA family.

It is found in the cytoplasm. The sequence is that of Interferon-induced GTP-binding protein MxC (mxc) from Danio rerio (Zebrafish).